We begin with the raw amino-acid sequence, 246 residues long: uncharacterized protein (246 aa).

An N-terminal signal peptide occupies residues 1–30 (MKKKQVSHAIIISVMLSFVIAVFHTIHASE).

This is an uncharacterized protein from Bacillus subtilis (strain 168).